Consider the following 244-residue polypeptide: MLKAVIDAETLRDAIEAVSSLVDEVKFTITEKGLELKAVDPANVAMVSLKIDASAFEFYQATPGEIGVDLVRLSDLLSMADRGERVRLELLEDERKLRIGVGSLSYTLSLIDPSAIRKEPRIPELDLPAHVAIPGAEFRRAIKAAEKVSDHVVLGVKDDIFYMEAKGDIDALKLTMRSSELLDMKPGEARSLFSLDYLSDMSKSIGKAPEVKLEIGIDYPLRISFMLKDNVHVSYLLAPRIEQE.

The protein belongs to the PCNA family. Homotrimer. The subunits circularize to form a toroid; DNA passes through its center. Replication factor C (RFC) is required to load the toroid on the DNA.

Its function is as follows. Sliding clamp subunit that acts as a moving platform for DNA processing. Responsible for tethering the catalytic subunit of DNA polymerase and other proteins to DNA during high-speed replication. In Methanothrix thermoacetophila (strain DSM 6194 / JCM 14653 / NBRC 101360 / PT) (Methanosaeta thermophila), this protein is DNA polymerase sliding clamp.